A 161-amino-acid polypeptide reads, in one-letter code: Myosin regulatory light chain A, smooth adductor muscle (161 aa).

Residue Ala1 is modified to Blocked amino end (Ala). EF-hand domains are found at residues 20 to 55 (KLMQ…LGRT) and 89 to 124 (DTEE…MGDN). Asp33, Asn35, Asp37, and Asp44 together coordinate Ca(2+).

Functionally, in molluscan muscle, calcium regulation is associated with myosin rather than with actin. Muscle myosin contains two types of light chains: the catalytic light chain, essential for ATPase activity, and the regulatory light chain, a calcium-binding protein responsible for Ca(2+) dependent binding and Ca(2+) dependent Mg-ATPase activity. This Mizuhopecten yessoensis (Japanese scallop) protein is Myosin regulatory light chain A, smooth adductor muscle.